Here is a 692-residue protein sequence, read N- to C-terminus: Vacuolar amino acid transporter 3 (692 aa).

Over residues M1–Q14 the composition is skewed to polar residues. Residues M1–L71 form a disordered region. A compositionally biased stretch (low complexity) spans S15–G24. The segment covering G28–T38 has biased composition (polar residues). S59, S119, and S121 each carry phosphoserine. 2 disordered regions span residues K135 to K170 and D258 to P294. Residues P141–P153 are compositionally biased toward low complexity. A compositionally biased stretch (polar residues) spans A154–S167. S165 is subject to Phosphoserine. Residues D258–E279 are compositionally biased toward acidic residues. Transmembrane regions (helical) follow at residues A302–F322, F329–I349, F374–F394, G412–L432, A443–Y463, W483–I503, A519–F539, V561–I581, Y607–L627, F630–L650, and L665–Q685.

This sequence belongs to the amino acid/polyamine transporter 2 family.

The protein resides in the vacuole membrane. In terms of biological role, involved in amino acid efflux from the vacuole to the cytoplasm. Capable of transporting large neutral amino acids including tyrosine, glutamine, asparagine, isoleucine and leucine. In Saccharomyces cerevisiae (strain ATCC 204508 / S288c) (Baker's yeast), this protein is Vacuolar amino acid transporter 3 (AVT3).